The following is a 591-amino-acid chain: Aspartate--tRNA(Asp/Asn) ligase (591 aa).

Residue E175 participates in L-aspartate binding. The interval 199–202 (QQYK) is aspartate. L-aspartate-binding residues include R221 and H450. 221-223 (RDE) contributes to the ATP binding site. Position 484 (E484) interacts with ATP. R491 contributes to the L-aspartate binding site. 536-539 (GVDR) lines the ATP pocket.

It belongs to the class-II aminoacyl-tRNA synthetase family. Type 1 subfamily. As to quaternary structure, homodimer.

The protein resides in the cytoplasm. The enzyme catalyses tRNA(Asx) + L-aspartate + ATP = L-aspartyl-tRNA(Asx) + AMP + diphosphate. Functionally, aspartyl-tRNA synthetase with relaxed tRNA specificity since it is able to aspartylate not only its cognate tRNA(Asp) but also tRNA(Asn). Reaction proceeds in two steps: L-aspartate is first activated by ATP to form Asp-AMP and then transferred to the acceptor end of tRNA(Asp/Asn). The sequence is that of Aspartate--tRNA(Asp/Asn) ligase from Rhodopseudomonas palustris (strain TIE-1).